The sequence spans 216 residues: ATP phosphoribosyltransferase (216 aa).

This sequence belongs to the ATP phosphoribosyltransferase family. Short subfamily. As to quaternary structure, heteromultimer composed of HisG and HisZ subunits.

It localises to the cytoplasm. The catalysed reaction is 1-(5-phospho-beta-D-ribosyl)-ATP + diphosphate = 5-phospho-alpha-D-ribose 1-diphosphate + ATP. It functions in the pathway amino-acid biosynthesis; L-histidine biosynthesis; L-histidine from 5-phospho-alpha-D-ribose 1-diphosphate: step 1/9. Its function is as follows. Catalyzes the condensation of ATP and 5-phosphoribose 1-diphosphate to form N'-(5'-phosphoribosyl)-ATP (PR-ATP). Has a crucial role in the pathway because the rate of histidine biosynthesis seems to be controlled primarily by regulation of HisG enzymatic activity. The polypeptide is ATP phosphoribosyltransferase (Streptococcus thermophilus (strain ATCC BAA-491 / LMD-9)).